Consider the following 58-residue polypeptide: Dortoxin (58 aa).

The 56-residue stretch at 3–58 folds into the LCN-type CS-alpha/beta domain; sequence VPGNYPLDKDGNTYTCLKLGENKDCQKVCKLHGVQYGYCYAFECWCKEYLDDKDSV. Disulfide bonds link C18-C41, C27-C46, and C31-C48.

In terms of tissue distribution, expressed by the venom gland.

Its subcellular location is the secreted. Functionally, binds to sodium channels (Nav) and affects the channel activation process. In mice, causes hyperactivity that persists until death. The sequence is that of Dortoxin from Parabuthus transvaalicus (Transvaal thick-tailed scorpion).